Reading from the N-terminus, the 355-residue chain is Probable butyrate kinase (355 aa).

The protein belongs to the acetokinase family.

Its subcellular location is the cytoplasm. The enzyme catalyses butanoate + ATP = butanoyl phosphate + ADP. In Clostridium botulinum (strain Alaska E43 / Type E3), this protein is Probable butyrate kinase.